A 138-amino-acid polypeptide reads, in one-letter code: MRHGKVHRKLNRTAEHRKAMFANMAASLIKHEQIVTTLPKAKELRPIVEKLVTLGKKGGLDKRRQAISEMRDIDQVKKLFAVLAPRYKDRQGGYTRIIKAGFRYGDNAPMAVIEFVDRDVDAKGQDSGPVQEKATEAA.

Belongs to the bacterial ribosomal protein bL17 family. In terms of assembly, part of the 50S ribosomal subunit. Contacts protein L32.

This Nitrobacter hamburgensis (strain DSM 10229 / NCIMB 13809 / X14) protein is Large ribosomal subunit protein bL17.